The sequence spans 102 residues: NADH-quinone oxidoreductase subunit K 1 (102 aa).

A run of 3 helical transmembrane segments spans residues 5-25, 31-51, and 65-85; these read ISHY…GIFL, IIIL…MVAF, and LFIL…LVVF.

Belongs to the complex I subunit 4L family. In terms of assembly, NDH-1 is composed of 14 different subunits. Subunits NuoA, H, J, K, L, M, N constitute the membrane sector of the complex.

The protein localises to the cell inner membrane. The catalysed reaction is a quinone + NADH + 5 H(+)(in) = a quinol + NAD(+) + 4 H(+)(out). NDH-1 shuttles electrons from NADH, via FMN and iron-sulfur (Fe-S) centers, to quinones in the respiratory chain. The immediate electron acceptor for the enzyme in this species is believed to be ubiquinone. Couples the redox reaction to proton translocation (for every two electrons transferred, four hydrogen ions are translocated across the cytoplasmic membrane), and thus conserves the redox energy in a proton gradient. The sequence is that of NADH-quinone oxidoreductase subunit K 1 from Rhizobium meliloti (strain 1021) (Ensifer meliloti).